The following is a 421-amino-acid chain: PDZ and LIM domain protein 7 (421 aa).

The PDZ domain maps to 1-85 (MEEYKVTLDG…KLGLVLSRFA (85 aa)). The segment at 115 to 193 (IARPFGSGTP…STGPAVRPPW (79 aa)) is disordered. Residues 147–172 (YPSSQMPQGQLQNGQKSRTVSNVSGK) are compositionally biased toward polar residues. LIM zinc-binding domains follow at residues 244–302 (PVCS…ARFA), 303–362 (PNCA…MFGT), and 363–421 (KCRG…FSNV).

Its subcellular location is the cytoplasm. The protein resides in the cytoskeleton. May function as a scaffold on which the coordinated assembly of proteins can occur. May play a role as an adapter that, via its PDZ domain, localizes LIM-binding proteins to actin filaments of both skeletal muscle and nonmuscle tissues. This is PDZ and LIM domain protein 7 (pdlim7) from Xenopus laevis (African clawed frog).